Reading from the N-terminus, the 425-residue chain is Trigger factor (425 aa).

A PPIase FKBP-type domain is found at 158 to 231 (GDLVRISMEV…VQEVYRRTLP (74 aa)).

This sequence belongs to the FKBP-type PPIase family. Tig subfamily.

The protein localises to the cytoplasm. The enzyme catalyses [protein]-peptidylproline (omega=180) = [protein]-peptidylproline (omega=0). Involved in protein export. Acts as a chaperone by maintaining the newly synthesized protein in an open conformation. Functions as a peptidyl-prolyl cis-trans isomerase. This Thermotoga neapolitana (strain ATCC 49049 / DSM 4359 / NBRC 107923 / NS-E) protein is Trigger factor.